The chain runs to 273 residues: Putative phosphoenolpyruvate synthase regulatory protein (273 aa).

154–161 (GVSRSGKT) contacts ADP.

It belongs to the pyruvate, phosphate/water dikinase regulatory protein family. PSRP subfamily.

The catalysed reaction is [pyruvate, water dikinase] + ADP = [pyruvate, water dikinase]-phosphate + AMP + H(+). It carries out the reaction [pyruvate, water dikinase]-phosphate + phosphate + H(+) = [pyruvate, water dikinase] + diphosphate. Its function is as follows. Bifunctional serine/threonine kinase and phosphorylase involved in the regulation of the phosphoenolpyruvate synthase (PEPS) by catalyzing its phosphorylation/dephosphorylation. The chain is Putative phosphoenolpyruvate synthase regulatory protein from Neisseria meningitidis serogroup C (strain 053442).